The following is a 264-amino-acid chain: S-adenosylmethionine decarboxylase proenzyme (264 aa).

Catalysis depends on Ser112, which acts as the Schiff-base intermediate with substrate; via pyruvic acid. Residue Ser112 is modified to Pyruvic acid (Ser); by autocatalysis. The active-site Proton acceptor; for processing activity is His117. Cys140 (proton donor; for catalytic activity) is an active-site residue.

Belongs to the prokaryotic AdoMetDC family. Type 2 subfamily. Heterooctamer of four alpha and four beta chains arranged as a tetramer of alpha/beta heterodimers. The cofactor is pyruvate. Is synthesized initially as an inactive proenzyme. Formation of the active enzyme involves a self-maturation process in which the active site pyruvoyl group is generated from an internal serine residue via an autocatalytic post-translational modification. Two non-identical subunits are generated from the proenzyme in this reaction, and the pyruvate is formed at the N-terminus of the alpha chain, which is derived from the carboxyl end of the proenzyme. The post-translation cleavage follows an unusual pathway, termed non-hydrolytic serinolysis, in which the side chain hydroxyl group of the serine supplies its oxygen atom to form the C-terminus of the beta chain, while the remainder of the serine residue undergoes an oxidative deamination to produce ammonia and the pyruvoyl group blocking the N-terminus of the alpha chain.

The enzyme catalyses S-adenosyl-L-methionine + H(+) = S-adenosyl 3-(methylsulfanyl)propylamine + CO2. Its pathway is amine and polyamine biosynthesis; S-adenosylmethioninamine biosynthesis; S-adenosylmethioninamine from S-adenosyl-L-methionine: step 1/1. In terms of biological role, catalyzes the decarboxylation of S-adenosylmethionine to S-adenosylmethioninamine (dcAdoMet), the propylamine donor required for the synthesis of the polyamines spermine and spermidine from the diamine putrescine. The protein is S-adenosylmethionine decarboxylase proenzyme of Salmonella agona (strain SL483).